A 457-amino-acid chain; its full sequence is Non-structural protein V (457 aa).

Disordered regions lie at residues 26–104 (KTYG…DPDD) and 193–403 (FVPK…MPIK). 2 stretches are compositionally biased toward polar residues: residues 28 to 37 (YGRSSIQQPS) and 77 to 96 (DLSS…SNTR). The span at 240 to 252 (SDDEDENQLEYED) shows a compositional bias: acidic residues. A Phosphoserine; by host modification is found at Ser-257. Residues 296-317 (FPEKEETPDVRRKDSLMQDSCK) are compositionally biased toward basic and acidic residues. At Ser-350 the chain carries Phosphoserine; by host. Positions 406, 425, 429, 441, 443, 446, 450, and 453 each coordinate Zn(2+).

It belongs to the paramyxoviruses V protein family. As to quaternary structure, interacts with host IFIH1/MDA5, DHX58/LGP2, STAT1 and STAT2.

It is found in the host cytoplasm. Functionally, plays an essential role in the inhibition of host immune response. Prevents the establishment of cellular antiviral state by blocking interferon-alpha/beta (IFN-alpha/beta) production and signaling pathway. Interacts with host IFIH1/MDA5 and DHX58/LGP2 to inhibit the transduction pathway involved in the activation of IFN-beta promoter, thus protecting the virus against cell antiviral state. Blocks the type I interferon signaling pathway by interacting with host STAT1 and STAT2 and thereby inhibiting their phosphorylation and subsequent nuclear translocation. Efficiently blocks the type II interferon signaling pathway. The sequence is that of Non-structural protein V (P/V/C) from Hendra virus (isolate Horse/Autralia/Hendra/1994).